The following is a 210-amino-acid chain: Holliday junction resolvase RecU (210 aa).

Residues 1-34 (MAFHYPNGQPYSNHETKQPKKQGRHTSPTTLYGK) form a disordered region. Mg(2+)-binding residues include T90, D92, E105, and Q124.

It belongs to the RecU family. It depends on Mg(2+) as a cofactor.

It localises to the cytoplasm. It carries out the reaction Endonucleolytic cleavage at a junction such as a reciprocal single-stranded crossover between two homologous DNA duplexes (Holliday junction).. Its function is as follows. Endonuclease that resolves Holliday junction intermediates in genetic recombination. Cleaves mobile four-strand junctions by introducing symmetrical nicks in paired strands. Promotes annealing of linear ssDNA with homologous dsDNA. Required for DNA repair, homologous recombination and chromosome segregation. In Latilactobacillus sakei subsp. sakei (strain 23K) (Lactobacillus sakei subsp. sakei), this protein is Holliday junction resolvase RecU.